We begin with the raw amino-acid sequence, 622 residues long: Peptidoglycan O-acetyltransferase OatA (622 aa).

A run of 11 helical transmembrane segments spans residues 11 to 31, 39 to 59, 81 to 101, 143 to 163, 173 to 193, 212 to 232, 237 to 257, 267 to 287, 307 to 327, 334 to 354, and 387 to 407; these read YVPS…AYHL, GFIG…NILL, LIPA…FFHP, LWSL…LLVF, LLKI…ILYV, LLSG…PVVP, AVLN…TAFV, GGLL…SHPA, YGIY…LEIT, AILQ…FIET, and IAGV…VLSV. The disordered stretch occupies residues 412 to 467; it reads EKQQTSVKTTTSTPDEKKDDKKEDKATKDKEADSNKASEQKETQKPDNKNKSAATP. Over residues 413–424 the composition is skewed to low complexity; that stretch reads KQQTSVKTTTST. Residues 425–461 are compositionally biased toward basic and acidic residues; sequence PDEKKDDKKEDKATKDKEADSNKASEQKETQKPDNKN. Residues serine 480, aspartate 600, and histidine 603 contribute to the active site.

Belongs to the acyltransferase 3 family.

The protein localises to the cell membrane. The protein resides in the secreted. It localises to the cell wall. Functionally, responsible for O-acetylation at the C6-hydroxyl group of N-acetylmuramyl residues, forming the corresponding N,6-O-diacetylmuramic acid of the peptidoglycan. O-acetylation of the peptidoglycan is the major determinant for lysozyme resistance. Critical for virulence and escape from innate immune response of the host. Involved at both early and later stages of listeriosis in the mouse model of infection. Required for successful host colonization and for intracellular survival of bacteria in macrophages of the infected host. Controls the production of inflammatory mediators in the liver of the infected host. Confers resistance to host antimicrobial molecules and to cell wall-targeting molecules such as beta-lactam antibiotics and bacteriocins. This chain is Peptidoglycan O-acetyltransferase OatA, found in Listeria monocytogenes serovar 1/2a (strain ATCC BAA-679 / EGD-e).